A 324-amino-acid polypeptide reads, in one-letter code: UDP-N-acetylenolpyruvoylglucosamine reductase (324 aa).

Positions 36–217 (FRAGGLAELM…IRAEMDAVRA (182 aa)) constitute an FAD-binding PCMH-type domain. The active site involves Arg-183. Catalysis depends on Ser-232, which acts as the Proton donor. The active site involves Glu-302.

It belongs to the MurB family. FAD is required as a cofactor.

It localises to the cytoplasm. The enzyme catalyses UDP-N-acetyl-alpha-D-muramate + NADP(+) = UDP-N-acetyl-3-O-(1-carboxyvinyl)-alpha-D-glucosamine + NADPH + H(+). The protein operates within cell wall biogenesis; peptidoglycan biosynthesis. Functionally, cell wall formation. In Rhizobium rhizogenes (strain K84 / ATCC BAA-868) (Agrobacterium radiobacter), this protein is UDP-N-acetylenolpyruvoylglucosamine reductase.